Consider the following 195-residue polypeptide: Neurensin-1 (195 aa).

2 helical membrane passes run 66-86 and 120-140; these read LISG…GFLV and AVLF…SVFV.

The protein belongs to the VMP family. In terms of tissue distribution, expressed in brain. Not detectable in other tissues tested.

The protein localises to the membrane. It is found in the cell projection. It localises to the neuron projection. Its function is as follows. May play an important role in neural organelle transport, and in transduction of nerve signals or in nerve growth. May play a role in neurite extension. May play a role in memory consolidation. The polypeptide is Neurensin-1 (Homo sapiens (Human)).